A 483-amino-acid polypeptide reads, in one-letter code: Probable glycine dehydrogenase (decarboxylating) subunit 2 (483 aa).

The segment at 1 to 33 (MLIFEHSRKNRRNYSQAPATRPAKNNIPDHLKR) is disordered. An N6-(pyridoxal phosphate)lysine modification is found at lysine 264.

Belongs to the GcvP family. C-terminal subunit subfamily. The glycine cleavage system is composed of four proteins: P, T, L and H. In this organism, the P 'protein' is a heterodimer of two subunits. Pyridoxal 5'-phosphate is required as a cofactor.

The enzyme catalyses N(6)-[(R)-lipoyl]-L-lysyl-[glycine-cleavage complex H protein] + glycine + H(+) = N(6)-[(R)-S(8)-aminomethyldihydrolipoyl]-L-lysyl-[glycine-cleavage complex H protein] + CO2. In terms of biological role, the glycine cleavage system catalyzes the degradation of glycine. The P protein binds the alpha-amino group of glycine through its pyridoxal phosphate cofactor; CO(2) is released and the remaining methylamine moiety is then transferred to the lipoamide cofactor of the H protein. This chain is Probable glycine dehydrogenase (decarboxylating) subunit 2, found in Nitrosomonas europaea (strain ATCC 19718 / CIP 103999 / KCTC 2705 / NBRC 14298).